A 291-amino-acid chain; its full sequence is MKLGIITIERDAVVNDLIKSCEKYEVDYKVITPSNIVAGFNLDFKLKYYKSFLDELDCCFVRNLGWDSFFRFDVLKYLNHYIPVINPPDGIDRASNKFLTSVFLELNNLPQPKTVVTESINEAIVWIDKFEEAVLKPIFGCGGEGIVRVKKELPISTKLKILNEFKEKYNTFYIQEFIKPVRNEHRDIRAFVVDDEVVAAMYRIGGENWKNNVSQGGRVEKCEITEEIEKLALKAKNALGLFYAGVDLIESEDGLKVLEVNSTPSWIGLSKVSEVNIADKLLEKIIQYVKS.

The ATP-grasp domain occupies 101–286 (SVFLELNNLP…IADKLLEKII (186 aa)). ATP-binding positions include K136, 175–187 (QEFI…EHRD), and R203. D247, E259, and N261 together coordinate Mg(2+). Residues D247, E259, and N261 each coordinate Mn(2+).

It belongs to the RimK family. MptN subfamily. In terms of assembly, homodimer. Mg(2+) serves as cofactor. It depends on Mn(2+) as a cofactor.

The enzyme catalyses 5,6,7,8-tetrahydromethanopterin + L-glutamate + ATP = 5,6,7,8-tetrahydrosarcinapterin + ADP + phosphate + H(+). It participates in cofactor biosynthesis; 5,6,7,8-tetrahydrosarcinapterin biosynthesis. Functionally, catalyzes the ATP or GTP-dependent addition of one L-glutamate molecule to tetrahydromethanopterin, producing tetrahydrosarcinapterin. This chain is Tetrahydromethanopterin:alpha-L-glutamate ligase (mptN), found in Methanocaldococcus jannaschii (strain ATCC 43067 / DSM 2661 / JAL-1 / JCM 10045 / NBRC 100440) (Methanococcus jannaschii).